We begin with the raw amino-acid sequence, 406 residues long: telomere-associated protein 1 (406 aa).

The segment covering 20–40 (EHHNGSHDNDDKDKEDKEKQN) has biased composition (basic and acidic residues). The disordered stretch occupies residues 20–46 (EHHNGSHDNDDKDKEDKEKQNTEAVAA). The 60-residue stretch at 147–206 (TTRRVRLRWTQEETADLMEGCKVHGVGNWKKILTDPRFRFNNRTAVDLKDRFRTCFPEDY) folds into the HTH myb-type domain. A DNA-binding region (H-T-H motif) is located at residues 175–202 (WKKILTDPRFRFNNRTAVDLKDRFRTCF). Residues 234–288 (VNRKERRVFTPEEDERLLNGFMKHGPSWSNIQRDNELGLFERRSTDLRDRFRNAF) enclose the Myb-like domain. A disordered region spans residues 368–389 (TQELQPQAHSRKQQGGDGLKEE).

It localises to the nucleus. The protein resides in the chromosome. The protein localises to the telomere. In terms of biological role, telomere-binding protein that mediates telomere clustering by promoting formation of head-to-head dimers of DNA molecules through the telomeric tracts. Binds specifically 5'-TTAGTCAGGG-3' repeats in subtelomeric regions. The chain is telomere-associated protein 1 from Yarrowia lipolytica (strain CLIB 122 / E 150) (Yeast).